The primary structure comprises 270 residues: Phosphatidylglycerol--prolipoprotein diacylglyceryl transferase (270 aa).

The next 7 helical transmembrane spans lie at 10–30, 56–76, 92–112, 120–140, 175–195, 202–222, and 237–257; these read VAVA…LVGI, LIFW…VLFY, WKGG…AWWF, FFQL…AGRI, SQLY…NLYA, MAVS…VEFV, and VTMG…LIWL. A 1,2-diacyl-sn-glycero-3-phospho-(1'-sn-glycerol) is bound at residue Arg139.

Belongs to the Lgt family.

Its subcellular location is the cell inner membrane. It carries out the reaction L-cysteinyl-[prolipoprotein] + a 1,2-diacyl-sn-glycero-3-phospho-(1'-sn-glycerol) = an S-1,2-diacyl-sn-glyceryl-L-cysteinyl-[prolipoprotein] + sn-glycerol 1-phosphate + H(+). Its pathway is protein modification; lipoprotein biosynthesis (diacylglyceryl transfer). In terms of biological role, catalyzes the transfer of the diacylglyceryl group from phosphatidylglycerol to the sulfhydryl group of the N-terminal cysteine of a prolipoprotein, the first step in the formation of mature lipoproteins. This Pseudomonas syringae pv. syringae (strain B728a) protein is Phosphatidylglycerol--prolipoprotein diacylglyceryl transferase.